Consider the following 362-residue polypeptide: CLIP domain-containing serine protease B10 (362 aa).

Positions 1–19 (MAKVVDCVLLLAFIAVVRG) are cleaved as a signal peptide. One can recognise a Clip domain in the interval 22–75 (ACRTPDHRDGVCHPVQQCPSVRDEFFNSDRVLSEDEIDYLRKLQCKTKDVTICC). Cystine bridges form between C23-C74, C33-C66, and C39-C75. The 252-residue stretch at 110–361 (IIGGNYTAID…YLDWIRQNIR (252 aa)) folds into the Peptidase S1 domain. N114 carries N-linked (GlcNAc...) asparagine glycosylation. A disulfide bond links C140 and C156. Residues H155 and D220 each act as charge relay system in the active site. A glycan (N-linked (GlcNAc...) asparagine) is linked at N254. 2 disulfide bridges follow: C285–C300 and C310–C337. The active-site Charge relay system is the S314.

Belongs to the peptidase S1 family. CLIP subfamily. Forms a covalent heterodimer with SRPN2; the interaction inhibits CLIPB10 catalytic activity. Cleaved by an unknown protease into an active form.

The protein localises to the secreted. With respect to regulation, inhibited by serpin SRPN2. In terms of biological role, serine protease which preferentially cleaves after arginine residues. Involved in the innate immune response against parasite P.bergei infection by activating the melanization cascade. Probably in the hemolymph, cleaves and activates prophenoloxidase (PPO), which functions in the formation of pigments such as melanin and other polyphenolic compounds. In the susceptible strain G3, appears to be dispensable for ookinete elimination which occurs by lysis. The protein is CLIP domain-containing serine protease B10 of Anopheles gambiae (African malaria mosquito).